The following is a 353-amino-acid chain: MTINITKTKERPVFPFTAIVGQEEMKLALTLNVIDPKIGGVIIMGDRGTGKSTTIRAITDILPEIPIVENDPFNSHPQDFDLMSDEVRSRIEKGESIPSVMKKVSMIDLPLGATEDRVCGTIDIEKALTEGVKAFEPGLLAKANRGILYVDEVNLLDDHLVDILLDSAASGWNTVEREGISIRHPARFVLVGSGNPEEGELRPQLLDRFGMHSEIRTVRDPELRVKIVEQRSEFDKNPSACLETYKNQQTEFKQRIIQAQKVLPTVELDYDLRIRISKICGELDVDGLRGDIVTNRAAKAHAAFNGKQTVTVDDIKAVITMCLRHRLRKDPLETIDSGSKVQKVFEDIFADLM.

An ATP-binding site is contributed by 45–52 (GDRGTGKS).

Belongs to the Mg-chelatase subunits D/I family.

The protein resides in the plastid. The protein localises to the chloroplast. It carries out the reaction protoporphyrin IX + Mg(2+) + ATP + H2O = Mg-protoporphyrin IX + ADP + phosphate + 3 H(+). The protein operates within porphyrin-containing compound metabolism; chlorophyll biosynthesis. In terms of biological role, involved in chlorophyll biosynthesis; introduces a magnesium ion into protoporphyrin IX to yield Mg-protoporphyrin IX. This chain is Magnesium-chelatase subunit ChlI (chlI), found in Guillardia theta (Cryptophyte).